A 344-amino-acid chain; its full sequence is Putative voltage-gated potassium channel subunit beta (344 aa).

NADP(+) contacts are provided by Trp33, Asp62, Tyr67, Ser167, Gln193, Trp222, Ser223, Pro224, Leu225, Lys233, Arg243, Gly301, Ser303, Gln307, Glu310, and Asn311. Tyr67 (proton donor/acceptor) is an active-site residue.

The protein belongs to the shaker potassium channel beta subunit family. In terms of assembly, forms heteromultimeric complexes with potassium channel alpha subunits.

The protein localises to the cytoplasm. The protein resides in the nucleus. Probable accessory potassium channel protein which modulates the activity of the pore-forming alpha subunit. The chain is Putative voltage-gated potassium channel subunit beta from Schizosaccharomyces pombe (strain 972 / ATCC 24843) (Fission yeast).